The primary structure comprises 122 residues: Small ribosomal subunit protein uS12 (122 aa).

The segment at 1-24 (MPTINQLIRKKRKSTGKKRTAPAL) is disordered. The segment covering 8 to 20 (IRKKRKSTGKKRT) has biased composition (basic residues). The residue at position 89 (Asp-89) is a 3-methylthioaspartic acid.

Belongs to the universal ribosomal protein uS12 family. As to quaternary structure, part of the 30S ribosomal subunit. Contacts proteins S8 and S17. May interact with IF1 in the 30S initiation complex.

With S4 and S5 plays an important role in translational accuracy. Functionally, interacts with and stabilizes bases of the 16S rRNA that are involved in tRNA selection in the A site and with the mRNA backbone. Located at the interface of the 30S and 50S subunits, it traverses the body of the 30S subunit contacting proteins on the other side and probably holding the rRNA structure together. The combined cluster of proteins S8, S12 and S17 appears to hold together the shoulder and platform of the 30S subunit. The protein is Small ribosomal subunit protein uS12 of Natranaerobius thermophilus (strain ATCC BAA-1301 / DSM 18059 / JW/NM-WN-LF).